The sequence spans 265 residues: 3-methyl-2-oxobutanoate hydroxymethyltransferase (265 aa).

The Mg(2+) site is built by Asp41 and Asp80. 3-methyl-2-oxobutanoate-binding positions include 41-42 (DS), Asp80, and Lys110. Position 112 (Glu112) interacts with Mg(2+). Glu179 (proton acceptor) is an active-site residue.

This sequence belongs to the PanB family. Homodecamer; pentamer of dimers. It depends on Mg(2+) as a cofactor.

The protein localises to the cytoplasm. The catalysed reaction is 3-methyl-2-oxobutanoate + (6R)-5,10-methylene-5,6,7,8-tetrahydrofolate + H2O = 2-dehydropantoate + (6S)-5,6,7,8-tetrahydrofolate. The protein operates within cofactor biosynthesis; (R)-pantothenate biosynthesis; (R)-pantoate from 3-methyl-2-oxobutanoate: step 1/2. Its function is as follows. Catalyzes the reversible reaction in which hydroxymethyl group from 5,10-methylenetetrahydrofolate is transferred onto alpha-ketoisovalerate to form ketopantoate. This is 3-methyl-2-oxobutanoate hydroxymethyltransferase from Pseudothermotoga lettingae (strain ATCC BAA-301 / DSM 14385 / NBRC 107922 / TMO) (Thermotoga lettingae).